The following is a 461-amino-acid chain: Asparagine--tRNA ligase (461 aa).

This sequence belongs to the class-II aminoacyl-tRNA synthetase family. Homodimer.

The protein localises to the cytoplasm. The enzyme catalyses tRNA(Asn) + L-asparagine + ATP = L-asparaginyl-tRNA(Asn) + AMP + diphosphate + H(+). The polypeptide is Asparagine--tRNA ligase (Geobacter sulfurreducens (strain ATCC 51573 / DSM 12127 / PCA)).